Consider the following 511-residue polypeptide: Maturase K (511 aa).

It belongs to the intron maturase 2 family. MatK subfamily.

Its subcellular location is the plastid. The protein localises to the chloroplast. Usually encoded in the trnK tRNA gene intron. Probably assists in splicing its own and other chloroplast group II introns. The chain is Maturase K from Hordeum vulgare (Barley).